A 333-amino-acid polypeptide reads, in one-letter code: Taste receptor type 2 member 38 (333 aa).

Residues 1–17 (MLTLTRICTVSYEVRST) are Extracellular-facing. The chain crosses the membrane as a helical span at residues 18–38 (FLFISVLEFAVGFLTNAFIFL). Over 39–55 (VNFWDVVKRQPLSNSDC) the chain is Cytoplasmic. The chain crosses the membrane as a helical span at residues 56–76 (VLLCLSISRLFLHGLLFLSAI). Residues 77-94 (QLTHFQKLSEPLNHSYHA) lie on the Extracellular side of the membrane. The helical transmembrane segment at 95 to 115 (IIMLWMIANQANLWLATCLSL) threads the bilayer. Topologically, residues 116–142 (LYCSKLIRSSHTFLICLASWVSRKICQ) are cytoplasmic. Residues 143–163 (MLLGIILCSCICTVLCVWCYF) form a helical membrane-spanning segment. Topologically, residues 164 to 190 (SRPHFTVTTVLFTNNNTRLNWQIKDLN) are extracellular. N-linked (GlcNAc...) asparagine glycosylation occurs at Asn178. A helical transmembrane segment spans residues 191 to 211 (LFYSFLFCYLWSVPPFLLFLV). At 212–251 (SSGMLTVSLGRHMRTMKVYTRDFRDPSLEAHIKALKSLVS) the chain is on the cytoplasmic side. Residues 252 to 272 (FFCFFVISSCAAFISVPLLIL) traverse the membrane as a helical segment. Over 273–276 (WRDK) the chain is Extracellular. A helical transmembrane segment spans residues 277–297 (IGVMVCVGIMAACPSGHAAIL). Residues 298-333 (ISGNAKLRRAVTTILLWAQSSLKVRADHKADSRTLC) are Cytoplasmic-facing.

The protein belongs to the G-protein coupled receptor T2R family.

Its subcellular location is the membrane. Functionally, receptor that may play a role in the perception of bitterness and is gustducin-linked. May play a role in sensing the chemical composition of the gastrointestinal content. The activity of this receptor may stimulate alpha gustducin, mediate PLC-beta-2 activation and lead to the gating of TRPM5. The chain is Taste receptor type 2 member 38 (TAS2R38) from Hylobates klossii (Kloss's gibbon).